Here is a 359-residue protein sequence, read N- to C-terminus: Methyltransferase eqxD (359 aa).

S-adenosyl-L-methionine-binding positions include 198 to 199, D224, 248 to 249, R264, and R265; these read GG and SF.

It belongs to the class I-like SAM-binding methyltransferase superfamily. Cation-independent O-methyltransferase family.

The catalysed reaction is trichosetin + S-adenosyl-L-methionine = equisetin + S-adenosyl-L-homocysteine + H(+). The protein operates within mycotoxin biosynthesis. Methyltransferase; part of the gene cluster that mediates the biosynthesis of equisetin, a trans-fused decalin-containing tetramic acid with antimicrobial activity. The PKS module of eqxS together with the enoylreductase eqxC catalyze the formation of the polyketide unit which is then conjugated to L-serine by the condensation domain of the eqxS NRPS module. Activity of the Dieckmann cyclase domain (RED) results in release of the Dieckmann product intermediate. Diels-Alderase eqx3 is involved in endo-selective Diels-Alder cycloaddition to form the decalin ring, leading to the production of N-desmethylequisetin also called trichosetin. Subsequent N-methylation is carried out by eqxD to give equisetin. This is Methyltransferase eqxD from Fusarium heterosporum.